A 464-amino-acid chain; its full sequence is MIVFVRFNSSYGFPVEVDSDTSILQLKEVVAKRQGVPADQLRVIFAGKELPNHLTVQNCDLEQQSIVHIVQRPRRRSHETNASGGDEPQSTSEGSIWESRSLTRVDLSSHTLPVDSVGLAVILDTDSKRDSEAARGPVKPTYNSFFIYCKGPCHKVQPGKLRVQCGTCKQATLTLAQGPSCWDDVLIPNRMSGECQSPDCPGTRAEFFFKCGAHPTSDKDTSVALNLITSNRRSIPCIACTDVRSPVLVFQCNHRHVICLDCFHLYCVTRLNDRQFVHDAQLGYSLPCVAGCPNSLIKELHHFRILGEEQYTRYQQYGAEECVLQMGGVLCPRPGCGAGLLPEQGQRKVTCEGGNGLGCGFVFCRDCKEAYHEGDCDSLLEPSGATSQAYRVDKRAAEQARWEEASKETIKKTTKPCPRCNVPIEKNGGCMHMKCPQPQCKLEWCWNCGCEWNRACMGDHWFDV.

The Ubiquitin-like domain maps to M1–R76. S65 is subject to Phosphoserine; by PINK1. A disordered region spans residues V70 to I96. A necessary for PINK1-dependent localization to mitochondria region spans residues S77–P236. T80 carries the post-translational modification Phosphothreonine. Over residues T80 to I96 the composition is skewed to polar residues. The segment at P140–A224 adopts an RING-type 0; atypical zinc-finger fold. At T174 the chain carries Phosphothreonine; by PINK1. The segment at T203–C237 is SYT11 binding 1. At T216 the chain carries Phosphothreonine. A TRIAD supradomain region spans residues R233–V464. Residues C237, C240, C252, H256, C259, C262, C288, C292, C331, and C336 each contribute to the Zn(2+) site. The segment at C237–C292 adopts an RING-type 1 zinc-finger fold. Positions H256–C292 are SYT11 binding 2. The IBR-type zinc finger occupies T312–C376. K348 participates in a covalent cross-link: Glycyl lysine isopeptide (Lys-Gly) (interchain with G-Cter in ISG15). Residues C351, C359, C364, and C367 each contribute to the Zn(2+) site. K368 participates in a covalent cross-link: Glycyl lysine isopeptide (Lys-Gly) (interchain with G-Cter in ISG15). Positions 372 and 376 each coordinate Zn(2+). Residues D377 to T409 are REP. C417 and C420 together coordinate Zn(2+). The segment at C417–C448 adopts an RING-type 2; atypical zinc-finger fold. Residue C430 is part of the active site. Zn(2+) is bound by residues C435, C440, C445, C448, C456, and H460.

It belongs to the RBR family. Parkin subfamily. As to quaternary structure, forms an E3 ubiquitin ligase complex with UBE2L3 or UBE2L6. Mediates 'Lys-63'-linked polyubiquitination by associating with UBE2V1. Part of a SCF-like complex, consisting of PRKN, CUL1 and FBXW7. Interacts with SNCAIP. Binds to the C2A and C2B domains of SYT11. Interacts and regulates the turnover of SEPTIN5. Part of a complex, including STUB1, HSP70 and GPR37. The amount of STUB1 in the complex increases during ER stress. STUB1 promotes the dissociation of HSP70 from PRKN and GPR37, thus facilitating PRKN-mediated GPR37 ubiquitination. HSP70 transiently associates with unfolded GPR37 and inhibits the E3 activity of PRKN, whereas, STUB1 enhances the E3 activity of PRKN through promotion of dissociation of HSP70 from PRKN-GPR37 complexes. Interacts with PSMD4 and PACRG. Interacts with LRRK2. Interacts with RANBP2. Interacts with SUMO1 but not SUMO2, which promotes nuclear localization and autoubiquitination. Interacts (via first RING-type domain) with AIMP2 (via N-terminus). Interacts with PSMA7 and RNF41. Interacts with PINK1. Forms a complex with PINK1 and PARK7. Interacts with CHPF, the interaction with isoform 2 may facilitate PRKN transport into the mitochondria. Interacts with MFN2 (phosphorylated), promotes PRKN localization in dysfunctional depolarized mitochondria. Interacts with FBXO7; this promotes translocation to dysfunctional depolarized mitochondria. Interacts with ZNF746. Interacts with heat shock protein 70 family members, including HSPA1L, HSPA1A and HSPA8; interaction HSPA1L promotes translocation to damaged mitochondria. Interacts with BAG4 and, to a lesser extent, BAG5; interaction with BAG4 inhibits translocation to damaged mitochondria. Forms a complex with PRKN and PARK7. Interacts with AMBRA1. Post-translationally, auto-ubiquitinates in an E2-dependent manner leading to its own degradation. Also polyubiquitinated by RNF41 for proteasomal degradation. In terms of processing, S-nitrosylated. Phosphorylated. Activation requires phosphorylation at Ser-65 by PINK1 and binding to PINK1 phosphorylated ubiquitin. Phosphorylation at Thr-174 by PINK1 and at Thr-216 is important for mitochondrial localization. In terms of tissue distribution, expressed in all subdivisions of the brain (at protein level). Highly expressed in brainstem, cranial nerve, pontine, cerebellar nuclei, indusium griseum, nuclei reticularis, strata oriens and laccunosum moleculare of the hippocampal CA2 region. Low levels were found in the telencephalon and diencephalon. Expressed in heart, liver, skeletal muscle, kidney and testis.

Its subcellular location is the cytoplasm. It is found in the cytosol. The protein resides in the nucleus. It localises to the endoplasmic reticulum. The protein localises to the mitochondrion. Its subcellular location is the mitochondrion outer membrane. It is found in the cell projection. The protein resides in the neuron projection. It localises to the postsynaptic density. The protein localises to the presynapse. It catalyses the reaction [E2 ubiquitin-conjugating enzyme]-S-ubiquitinyl-L-cysteine + [acceptor protein]-L-lysine = [E2 ubiquitin-conjugating enzyme]-L-cysteine + [acceptor protein]-N(6)-ubiquitinyl-L-lysine.. Its pathway is protein modification; protein ubiquitination. In the autoinhibited state the side chain of Phe-462 inserts into a hydrophobic groove in RING-0, occluding the ubiquitin acceptor site Cys-430, whereas the REP repressor element binds RING-1 and blocks its E2-binding site. Activation of PRKN requires 2 steps: (1) phosphorylation at Ser-65 by PINK1 and (2) binding to phosphorylated ubiquitin, leading to unlock repression of the catalytic Cys-430 by the RING-0 region via an allosteric mechanism and converting PRKN to its fully-active form. According to another report, phosphorylation at Ser-65 by PINK1 is not essential for activation and only binding to phosphorylated ubiquitin is essential to unlock repression. In addition, ISG15 conjugation positively regulates its ubiquitin E3 ligase activity by suppressing the intramolecular interaction that maintains its autoinhibited conformation. In terms of biological role, functions within a multiprotein E3 ubiquitin ligase complex, catalyzing the covalent attachment of ubiquitin moieties onto substrate proteins. Substrates include SYT11 and VDAC1. Other substrates are BCL2, CCNE1, GPR37, RHOT1/MIRO1, MFN1, MFN2, STUB1, SNCAIP, SEPTIN5, TOMM20, USP30, ZNF746, MIRO1 and AIMP2. Mediates monoubiquitination as well as 'Lys-6', 'Lys-11', 'Lys-48'-linked and 'Lys-63'-linked polyubiquitination of substrates depending on the context. Participates in the removal and/or detoxification of abnormally folded or damaged protein by mediating 'Lys-63'-linked polyubiquitination of misfolded proteins such as PARK7: 'Lys-63'-linked polyubiquitinated misfolded proteins are then recognized by HDAC6, leading to their recruitment to aggresomes, followed by degradation. Mediates 'Lys-63'-linked polyubiquitination of a 22 kDa O-linked glycosylated isoform of SNCAIP, possibly playing a role in Lewy-body formation. Mediates monoubiquitination of BCL2, thereby acting as a positive regulator of autophagy. Protects against mitochondrial dysfunction during cellular stress, by acting downstream of PINK1 to coordinate mitochondrial quality control mechanisms that remove and replace dysfunctional mitochondrial components. Depending on the severity of mitochondrial damage and/or dysfunction, activity ranges from preventing apoptosis and stimulating mitochondrial biogenesis to regulating mitochondrial dynamics and eliminating severely damaged mitochondria via mitophagy. Activation and recruitment onto the outer membrane of damaged/dysfunctional mitochondria (OMM) requires PINK1-mediated phosphorylation of both PRKN and ubiquitin. After mitochondrial damage, functions with PINK1 to mediate the decision between mitophagy or preventing apoptosis by inducing either the poly- or monoubiquitination of VDAC1, respectively; polyubiquitination of VDAC1 promotes mitophagy, while monoubiquitination of VDAC1 decreases mitochondrial calcium influx which ultimately inhibits apoptosis. When cellular stress results in irreversible mitochondrial damage, promotes the autophagic degradation of dysfunctional depolarized mitochondria (mitophagy) by promoting the ubiquitination of mitochondrial proteins such as TOMM20, RHOT1/MIRO1, MFN1 and USP30. Preferentially assembles 'Lys-6'-, 'Lys-11'- and 'Lys-63'-linked polyubiquitin chains, leading to mitophagy. The PINK1-PRKN pathway also promotes fission of damaged mitochondria by PINK1-mediated phosphorylation which promotes the PRKN-dependent degradation of mitochondrial proteins involved in fission such as MFN2. This prevents the refusion of unhealthy mitochondria with the mitochondrial network or initiates mitochondrial fragmentation facilitating their later engulfment by autophagosomes. Regulates motility of damaged mitochondria via the ubiquitination and subsequent degradation of MIRO1 and MIRO2; in motor neurons, this likely inhibits mitochondrial intracellular anterograde transport along the axons which probably increases the chance of the mitochondria undergoing mitophagy in the soma. Involved in mitochondrial biogenesis via the 'Lys-48'-linked polyubiquitination of transcriptional repressor ZNF746/PARIS which leads to its subsequent proteasomal degradation and allows activation of the transcription factor PPARGC1A. Limits the production of reactive oxygen species (ROS). Regulates cyclin-E during neuronal apoptosis. In collaboration with CHPF isoform 2, may enhance cell viability and protect cells from oxidative stress. Independently of its ubiquitin ligase activity, protects from apoptosis by the transcriptional repression of p53/TP53. May protect neurons against alpha synuclein toxicity, proteasomal dysfunction, GPR37 accumulation, and kainate-induced excitotoxicity. May play a role in controlling neurotransmitter trafficking at the presynaptic terminal and in calcium-dependent exocytosis. May represent a tumor suppressor gene. The chain is E3 ubiquitin-protein ligase parkin from Mus musculus (Mouse).